We begin with the raw amino-acid sequence, 292 residues long: Phosphatidylserine decarboxylase proenzyme (292 aa).

Residues Asp-98, His-153, and Ser-254 each act as charge relay system; for autoendoproteolytic cleavage activity in the active site. The active-site Schiff-base intermediate with substrate; via pyruvic acid; for decarboxylase activity is Ser-254. Ser-254 is subject to Pyruvic acid (Ser); by autocatalysis.

The protein belongs to the phosphatidylserine decarboxylase family. PSD-B subfamily. Prokaryotic type I sub-subfamily. As to quaternary structure, heterodimer of a large membrane-associated beta subunit and a small pyruvoyl-containing alpha subunit. Pyruvate serves as cofactor. In terms of processing, is synthesized initially as an inactive proenzyme. Formation of the active enzyme involves a self-maturation process in which the active site pyruvoyl group is generated from an internal serine residue via an autocatalytic post-translational modification. Two non-identical subunits are generated from the proenzyme in this reaction, and the pyruvate is formed at the N-terminus of the alpha chain, which is derived from the carboxyl end of the proenzyme. The autoendoproteolytic cleavage occurs by a canonical serine protease mechanism, in which the side chain hydroxyl group of the serine supplies its oxygen atom to form the C-terminus of the beta chain, while the remainder of the serine residue undergoes an oxidative deamination to produce ammonia and the pyruvoyl prosthetic group on the alpha chain. During this reaction, the Ser that is part of the protease active site of the proenzyme becomes the pyruvoyl prosthetic group, which constitutes an essential element of the active site of the mature decarboxylase.

The protein resides in the cell membrane. The catalysed reaction is a 1,2-diacyl-sn-glycero-3-phospho-L-serine + H(+) = a 1,2-diacyl-sn-glycero-3-phosphoethanolamine + CO2. It functions in the pathway phospholipid metabolism; phosphatidylethanolamine biosynthesis; phosphatidylethanolamine from CDP-diacylglycerol: step 2/2. Catalyzes the formation of phosphatidylethanolamine (PtdEtn) from phosphatidylserine (PtdSer). This chain is Phosphatidylserine decarboxylase proenzyme, found in Halorhodospira halophila (strain DSM 244 / SL1) (Ectothiorhodospira halophila (strain DSM 244 / SL1)).